The following is a 189-amino-acid chain: Elongation factor P (189 aa).

Belongs to the elongation factor P family.

The protein localises to the cytoplasm. It functions in the pathway protein biosynthesis; polypeptide chain elongation. Functionally, involved in peptide bond synthesis. Stimulates efficient translation and peptide-bond synthesis on native or reconstituted 70S ribosomes in vitro. Probably functions indirectly by altering the affinity of the ribosome for aminoacyl-tRNA, thus increasing their reactivity as acceptors for peptidyl transferase. The polypeptide is Elongation factor P (Ehrlichia canis (strain Jake)).